The following is a 130-amino-acid chain: Large ribosomal subunit protein uL22 (130 aa).

The protein belongs to the universal ribosomal protein uL22 family. In terms of assembly, part of the 50S ribosomal subunit.

This protein binds specifically to 23S rRNA; its binding is stimulated by other ribosomal proteins, e.g. L4, L17, and L20. It is important during the early stages of 50S assembly. It makes multiple contacts with different domains of the 23S rRNA in the assembled 50S subunit and ribosome. Its function is as follows. The globular domain of the protein is located near the polypeptide exit tunnel on the outside of the subunit, while an extended beta-hairpin is found that lines the wall of the exit tunnel in the center of the 70S ribosome. In Clavibacter sepedonicus (Clavibacter michiganensis subsp. sepedonicus), this protein is Large ribosomal subunit protein uL22.